We begin with the raw amino-acid sequence, 589 residues long: ABC transporter G family member 8 (589 aa).

Residues 16–261 (LTTSSISYTI…LLFKGFTVPP (246 aa)) form the ABC transporter domain. 62-69 (GPSGAGKS) lines the ATP pocket. In terms of domain architecture, ABC transmembrane type-2 spans 311–521 (TEISLLARRF…ALDALLINEY (211 aa)). The next 7 membrane-spanning stretches (helical) occupy residues 335–355 (ALEA…IGIG), 365–385 (MFAF…PIFI), 412–432 (VFLP…YFLI), 441–461 (FGYF…FVLF), 470–490 (ITGT…SGYF), 499–519 (YWLF…LLIN), and 560–580 (FNVY…FLAL).

Belongs to the ABC transporter superfamily. ABCG family. Eye pigment precursor importer (TC 3.A.1.204) subfamily.

The protein localises to the membrane. The polypeptide is ABC transporter G family member 8 (ABCG8) (Arabidopsis thaliana (Mouse-ear cress)).